The primary structure comprises 562 residues: uncharacterized protein (562 aa).

This is an uncharacterized protein from Escherichia coli (strain K12).